The sequence spans 218 residues: Very-long-chain (3R)-3-hydroxyacyl-CoA dehydratase hpo-8 (218 aa).

The next 5 membrane-spanning stretches (helical) occupy residues 15-35 (ILGW…GLTW), 44-64 (FELK…IVGL), 86-106 (ILHL…LVAW), 137-157 (LFYV…FASL), and 176-196 (MGIS…PGFP). Residues Tyr142 and Glu149 contribute to the active site.

The protein belongs to the very long-chain fatty acids dehydratase HACD family.

The protein localises to the membrane. The enzyme catalyses a very-long-chain (3R)-3-hydroxyacyl-CoA = a very-long-chain (2E)-enoyl-CoA + H2O. It functions in the pathway lipid metabolism; fatty acid biosynthesis. In terms of biological role, catalyzes the third of the four reactions of the long-chain fatty acids elongation cycle. This endoplasmic reticulum-bound enzymatic process, allows the addition of two carbons to the chain of long- and very long-chain fatty acids/VLCFAs per cycle. This enzyme catalyzes the dehydration of the 3-hydroxyacyl-CoA intermediate into trans-2,3-enoyl-CoA, within each cycle of fatty acid elongation. Thereby, it participates in the production of VLCFAs of different chain lengths that are involved in multiple biological processes as precursors of membrane lipids and lipid mediators. The protein is Very-long-chain (3R)-3-hydroxyacyl-CoA dehydratase hpo-8 (hpo-8) of Caenorhabditis elegans.